The chain runs to 360 residues: UPF0284 protein APE_2029.1 (360 aa).

Belongs to the UPF0284 family.

The polypeptide is UPF0284 protein APE_2029.1 (Aeropyrum pernix (strain ATCC 700893 / DSM 11879 / JCM 9820 / NBRC 100138 / K1)).